Reading from the N-terminus, the 831-residue chain is MSPSLFRSEEVSLVQLYLPTESARPIMSALGELSTIHFKDLNPDVVAFQRSFVREIRRLTDTERLLRYLHSEIDLNGIHVPDHNLPPSYESVLESSTIEDIIERITRLEARVRQLVESSQLLEARYLQQLEFANVLTKADAFFSKSGNTVDPLRNNYETSSIFSGEDDTTAPLIENALELGTTGTFDSEETSPQMNTTLDFVSGIIPTVKFQFLERILWRTLRGNLFIHQVRADDSLIHGAEKNEEKTIFLVIAHGTQILLRIRKISESLGATLFPVEEDAPGRTSQIQQANVSISDLNAVLENTRSALYTELTFIAEHISAWEAVLHKDKTVFQVMNLFNYDQNHKCLIAEGWCPTANLPMVQKTLRNISDLTDSQAPTILNVVHTSEQPPTYFRVNKFTEGFQSIIDSYGIATYREVNHGIVAIVTFPFLFAIMFGDLGHGAIMASVALMFVLYEKTLGAKKDLDEIVGMVFYGRYIVLLMGLFSMYVGFVYNDLFSKPMSIFSSRWVWPVKSEEAIARAVQVGTYPIGIDPTWHSADNNLLFMNSYKMKLSIILGVIHMTFCLFLSLSNYRFFKRKLDIYAVFVPSLIFLEAIFGYLVITIVYKWCIDWKAKDLQPPSLLNMLILMFLSPGTLEDQLYPGQKYLQVGLVIAALICVPWLLIVKPFVLWRRHSNEENKYQSLNSDLPNVDEADALMAVDSQEKQAEPFELGEVVIHQVIHTIEFCLGCVSHTASYLRLWALSLAHNQLSSVLWNMTLANGFRMTGIVGSIFVVILFGFWFIATCVVLVAMEGTSAMLHSLRLHWVEGMSKHFEGEGYAFTPFTFKVTAE.

At 1-418 the chain is on the cytoplasmic side; it reads MSPSLFRSEE…DSYGIATYRE (418 aa). Residues 419–437 traverse the membrane as a helical segment; it reads VNHGIVAIVTFPFLFAIMF. Residues 438–439 lie on the Vacuolar side of the membrane; the sequence is GD. Residues 440 to 456 traverse the membrane as a helical segment; sequence LGHGAIMASVALMFVLY. Topologically, residues 457–471 are cytoplasmic; it reads EKTLGAKKDLDEIVG. The chain crosses the membrane as a helical span at residues 472 to 501; that stretch reads MVFYGRYIVLLMGLFSMYVGFVYNDLFSKP. Residues 502-548 lie on the Vacuolar side of the membrane; the sequence is MSIFSSRWVWPVKSEEAIARAVQVGTYPIGIDPTWHSADNNLLFMNS. A helical membrane pass occupies residues 549–568; sequence YKMKLSIILGVIHMTFCLFL. Residues 569 to 586 lie on the Cytoplasmic side of the membrane; the sequence is SLSNYRFFKRKLDIYAVF. Residues 587 to 607 form a helical membrane-spanning segment; it reads VPSLIFLEAIFGYLVITIVYK. Residues 608-650 lie on the Vacuolar side of the membrane; it reads WCIDWKAKDLQPPSLLNMLILMFLSPGTLEDQLYPGQKYLQVG. Residues 651–670 traverse the membrane as a helical segment; it reads LVIAALICVPWLLIVKPFVL. Topologically, residues 671–723 are cytoplasmic; the sequence is WRRHSNEENKYQSLNSDLPNVDEADALMAVDSQEKQAEPFELGEVVIHQVIHT. Residues 724-748 traverse the membrane as a helical segment; it reads IEFCLGCVSHTASYLRLWALSLAHN. At 749 to 769 the chain is on the vacuolar side; sequence QLSSVLWNMTLANGFRMTGIV. Residues 770-808 traverse the membrane as a helical segment; it reads GSIFVVILFGFWFIATCVVLVAMEGTSAMLHSLRLHWVE. Residues 809 to 831 are Cytoplasmic-facing; the sequence is GMSKHFEGEGYAFTPFTFKVTAE.

It belongs to the V-ATPase 116 kDa subunit family. V-ATPase is a heteromultimeric enzyme composed of a peripheral catalytic V1 complex (components A to H) attached to an integral membrane V0 proton pore complex (components: a, c, c', c'', d, e, f and VOA1).

Its subcellular location is the vacuole membrane. In terms of biological role, subunit of the V0 complex of vacuolar(H+)-ATPase (V-ATPase), a multisubunit enzyme composed of a peripheral complex (V1) that hydrolyzes ATP and a membrane integral complex (V0) that translocates protons. V-ATPase is responsible for acidifying and maintaining the pH of intracellular compartments. The polypeptide is V-type proton ATPase subunit a (vph1) (Schizosaccharomyces pombe (strain 972 / ATCC 24843) (Fission yeast)).